A 224-amino-acid chain; its full sequence is Deoxyribose-phosphate aldolase (224 aa).

The active-site Proton donor/acceptor is the Asp92. The active-site Schiff-base intermediate with acetaldehyde is Lys154. Residue Lys183 is the Proton donor/acceptor of the active site.

This sequence belongs to the DeoC/FbaB aldolase family. DeoC type 1 subfamily.

It is found in the cytoplasm. It carries out the reaction 2-deoxy-D-ribose 5-phosphate = D-glyceraldehyde 3-phosphate + acetaldehyde. The protein operates within carbohydrate degradation; 2-deoxy-D-ribose 1-phosphate degradation; D-glyceraldehyde 3-phosphate and acetaldehyde from 2-deoxy-alpha-D-ribose 1-phosphate: step 2/2. Catalyzes a reversible aldol reaction between acetaldehyde and D-glyceraldehyde 3-phosphate to generate 2-deoxy-D-ribose 5-phosphate. The protein is Deoxyribose-phosphate aldolase of Actinobacillus succinogenes (strain ATCC 55618 / DSM 22257 / CCUG 43843 / 130Z).